A 154-amino-acid chain; its full sequence is Myoglobin (154 aa).

The 147-residue stretch at 2-148 (GLSDAEWQLV…FRNDIAAKYK (147 aa)) folds into the Globin domain. S4 carries the phosphoserine modification. H65 contacts nitrite. Position 65 (H65) interacts with O2. T68 is subject to Phosphothreonine. H94 is a binding site for heme b.

Belongs to the globin family. Monomeric.

The protein resides in the cytoplasm. It is found in the sarcoplasm. The catalysed reaction is Fe(III)-heme b-[protein] + nitric oxide + H2O = Fe(II)-heme b-[protein] + nitrite + 2 H(+). It catalyses the reaction H2O2 + AH2 = A + 2 H2O. Functionally, monomeric heme protein which primary function is to store oxygen and facilitate its diffusion within muscle tissues. Reversibly binds oxygen through a pentacoordinated heme iron and enables its timely and efficient release as needed during periods of heightened demand. Depending on the oxidative conditions of tissues and cells, and in addition to its ability to bind oxygen, it also has a nitrite reductase activity whereby it regulates the production of bioactive nitric oxide. Under stress conditions, like hypoxia and anoxia, it also protects cells against reactive oxygen species thanks to its pseudoperoxidase activity. The sequence is that of Myoglobin (MB) from Orycteropus afer (Aardvark).